Reading from the N-terminus, the 342-residue chain is MLSERQAKILKVIVSEYIKTNQAVSSKRIQELLNIKVSSATIRNDSAALEEMNFLEKQHTSSGRVPSTKGYRYYVDHLMEFDDYNESLKENLKSILFQRGTKIENVLEQASQIISEMTKMTAIVTKQNLNSELMVKKIDLIPLSETMASVIFILSNGEMQNQLFNLKDISLSDLSISIKIFSDCLVDTPVKEIENNISLIRPNLETTVKNYDLILETFMSNILQTKESKKEIVGMKNMLENPEFNDTDKLRKVINIMENMSPFDWFDVSYSSNQKMIQISTKIGEEISEDLSDISIVETAIKTEQGSTMLTLVGPKRVDYSQANQLINLIVEIINGDDHKNE.

This sequence belongs to the HrcA family.

In terms of biological role, negative regulator of class I heat shock genes (grpE-dnaK-dnaJ and groELS operons). Prevents heat-shock induction of these operons. The chain is Heat-inducible transcription repressor HrcA from Mesoplasma florum (strain ATCC 33453 / NBRC 100688 / NCTC 11704 / L1) (Acholeplasma florum).